The chain runs to 719 residues: Polyribonucleotide nucleotidyltransferase (719 aa).

The Mg(2+) site is built by Asp-491 and Asp-497. One can recognise a KH domain in the interval 558–617 (PRMLTIKINPEKIRDVIGKGGATIRALTEETGTQIDISDDGTIVIASVDETQAKEAQRRI). Residues 627–695 (GQIYDGSVLR…DKGRLRLSIK (69 aa)) enclose the S1 motif domain.

This sequence belongs to the polyribonucleotide nucleotidyltransferase family. Mg(2+) is required as a cofactor.

It localises to the cytoplasm. The enzyme catalyses RNA(n+1) + phosphate = RNA(n) + a ribonucleoside 5'-diphosphate. Involved in mRNA degradation. Catalyzes the phosphorolysis of single-stranded polyribonucleotides processively in the 3'- to 5'-direction. This is Polyribonucleotide nucleotidyltransferase from Bordetella parapertussis (strain 12822 / ATCC BAA-587 / NCTC 13253).